The sequence spans 62 residues: Small ribosomal subunit protein eS27 (62 aa).

The Zn(2+) site is built by C17, C20, C36, and C39. The C4-type zinc-finger motif lies at 17–39; the sequence is CPECNNEQIVFGSPATVVKCLTC.

This sequence belongs to the eukaryotic ribosomal protein eS27 family. Part of the 30S ribosomal subunit. Zn(2+) is required as a cofactor.

The polypeptide is Small ribosomal subunit protein eS27 (Methanocaldococcus jannaschii (strain ATCC 43067 / DSM 2661 / JAL-1 / JCM 10045 / NBRC 100440) (Methanococcus jannaschii)).